The chain runs to 567 residues: Periplasmic [NiFe] hydrogenase large subunit (567 aa).

Glu-62 provides a ligand contact to Mg(2+). 2 residues coordinate Ni(2+): Cys-81 and Cys-84. Cys-84 provides a ligand contact to Fe cation. Residue Leu-498 coordinates Mg(2+). Ni(2+) is bound by residues Cys-546 and Cys-549. Cys-549 is a binding site for Fe cation. Residue His-552 coordinates Mg(2+). Positions 553–567 (VIDGHTNEVHKFRIL) are excised as a propeptide.

It belongs to the [NiFe]/[NiFeSe] hydrogenase large subunit family. Heterodimer of a large and a small subunit. Ni(2+) serves as cofactor. The cofactor is Fe cation.

It is found in the periplasm. It catalyses the reaction 2 Fe(III)-[cytochrome c3] + H2 = 2 Fe(II)-[cytochrome c3] + 2 H(+). Catalyzes the reversible oxidoreduction of molecular hydrogen, in conjunction with a specific electron acceptor, cytochrome c3. In Nitratidesulfovibrio vulgaris (strain DSM 19637 / Miyazaki F) (Desulfovibrio vulgaris), this protein is Periplasmic [NiFe] hydrogenase large subunit (hydB).